Reading from the N-terminus, the 1693-residue chain is Non-structural polyprotein pORF1 (1693 aa).

Residues 56 to 240 (VFRPEVFWNH…HDVSNLRSWI (185 aa)) form the Alphavirus-like MT domain. Positions 241-439 (RTTKVTGDHP…FYAQCRRWLS (199 aa)) are Y-domain. C434 and C481 form a disulfide bridge. Residues 442–509 (FHLDPRVLVF…EAYEGSDVDP (68 aa)) are protease. Positions 510 to 691 (AESAISDISG…FSPGHVWESA (182 aa)) are zinc-binding. Residues H671, E673, and H686 each coordinate Zn(2+). The interval 712-770 (SSPAQPDLGFISEPSIPSRAATLTPAAPLPPPAPDPSPTPSAPARGEPAPGATARAPAI) is hinge. Positions 732–768 (ATLTPAAPLPPPAPDPSPTPSAPARGEPAPGATARAP) are disordered. Residues 738 to 752 (APLPPPAPDPSPTPS) are compositionally biased toward pro residues. The 147-residue stretch at 775 to 921 (ARHRRLLFTY…LYLPELAARW (147 aa)) folds into the Macro domain. The (+)RNA virus helicase ATP-binding domain occupies 934 to 1082 (ITEDVARTAN…RPDLAPTSWW (149 aa)). The NTPase/helicase stretch occupies residues 960-1204 (GCRVTPGVVQ…ISDAIVNNFF (245 aa)). 975–982 (GVPGSGKS) contributes to the ATP binding site. Residues 1083-1216 (HVTHRCPADV…GGEIGHQRPS (134 aa)) enclose the (+)RNA virus helicase C-terminal domain. The tract at residues 1207–1693 (GGEIGHQRPS…LTNSILCRVE (487 aa)) is RNA-directed RNA polymerase. The region spanning 1454-1565 (SMVFENDFSE…LCSEYRQSPG (112 aa)) is the RdRp catalytic domain.

It belongs to the hepevirus non-structural polyprotein family. The protease domain interacts with host EIF2AK4 (via C-terminus); this interaction inhibits dimerization of EIF2AK4 and prevents EIF2AK4-mediated phosphorylation of host EIF2A. It depends on Mg(2+) as a cofactor. Post-translationally, ORF1 polyprotein does not seem to be processed into distinct enzymatic domains by a viral protease belonging to ORF1, but could be processed by a host serine protease like thrombin.

It is found in the host cytoplasm. The protein localises to the host perinuclear region. It catalyses the reaction GTP + S-adenosyl-L-methionine = N(7)-methyl-GTP + S-adenosyl-L-homocysteine. It carries out the reaction RNA(n) + a ribonucleoside 5'-triphosphate = RNA(n+1) + diphosphate. With respect to regulation, putative protease: Inhibited by chymostatin. In terms of biological role, methyltransferase: Displays a capping enzyme activity. This function is necessary since all viral RNAs are synthesized in the cytoplasm, and host capping enzymes are restricted to the nucleus. The enzymatic reaction involves a covalent link between 7-methyl-GMP and the methyltransferase, whereas eukaryotic capping enzymes form a covalent complex only with GMP. Methyltransferase catalyzes transfer of a methyl group from S-adenosylmethionine to GTP and GDP to yield m(7)GTP or m(7)GDP. GDP is a better substrate than GTP. This enzyme also displays guanylyltransferase activity to form a covalent complex, methyltransferase-m(7)GMP, from which 7-methyl-GMP is transferred to the mRNA to create the cap structure. Its function is as follows. Y-domain: Indispensable for virus replication. Functionally, putative protease: The putative protease domain, although necessary for replication of the virus, may not be a protease but rather a structural Zn(2+)-binding domain. Inhibits induction of IFN-beta by MDA5 and RIG-I pathways and down-regulates the expression of MDA5. NTPase/helicase: Multi-functional protein that exhibits NTPase and RNA unwinding activities. Hydrolyzes all NTPs efficiently and unwinds RNA duplexes containing 5' overhangs. Possesses a sequence independent RNA-5'-triphosphatase (RTPase) activity suggestive of its role in forming viral cap structure. Also participates in viral genome replication, RNA translocation and genome packaging/unpackaging. In terms of biological role, RNA-directed RNA polymerase: Plays an essential role in the virus replication. Binds to the 3'-end of the genomic RNA to initiate viral replication. The polypeptide is Non-structural polyprotein pORF1 (Homo sapiens (Human)).